Consider the following 369-residue polypeptide: Virulence factor-related M protein (369 aa).

Positions 1–41 (MARQQTKKNYSLRKLKTGTASVAVALTVLGAGFANQTEVRA) are cleaved as a signal peptide. C repeat units follow at residues 120 to 154 (AKATKENEISEASRKGLSRDLEASRAAKKELEAKH), 162 to 196 (KKLTEANQVSEASRKGLSNDLEASRAAKKELEAKY), and 211 to 246 (QKLEADLPKFQRPSRKGLSRDLEASREANKKVTSEL). 4 stretches are compositionally biased toward basic and acidic residues: residues 125–165 (ENEI…KKLT), 202–219 (DHQALEAKHQKLEADLPK), 228–243 (LSRDLEASREANKKVT), and 257–271 (EESKKLSEKEKAELQ). Disordered stretches follow at residues 125–189 (ENEI…RAAK) and 202–271 (DHQA…AELQ). Positions 129 to 200 (SEASRKGLSR…ELEAKYQKLE (72 aa)) are 2 X repeats, type A. The interval 132–241 (SRKGLSRDLE…LEASREANKK (110 aa)) is 3 X repeats, type B. 4 D repeats span residues 272–277 (AKLDAQ), 278–283 (GKALKE), 286–291 (AKQTEE), and 293–298 (AKLRAE). The span at 292–301 (LAKLRAEKAA) shows a compositional bias: basic and acidic residues. A disordered region spans residues 292–341 (LAKLRAEKAAGSKTPATKPANKERSGRAAQTATRPSQNKGMRSQLPSTGE). A compositionally biased stretch (polar residues) spans 319–338 (AAQTATRPSQNKGMRSQLPS). The LPXTG sorting signal motif lies at 336 to 340 (LPSTG). Thr339 is subject to Pentaglycyl murein peptidoglycan amidated threonine. A propeptide spans 340–369 (GEAANPFFTAAAATVMVSAGMLALKRKEEN) (removed by sortase).

It belongs to the M protein family.

The protein localises to the secreted. The protein resides in the cell wall. This is Virulence factor-related M protein (ennX) from Streptococcus pyogenes serotype M49.